Here is a 1017-residue protein sequence, read N- to C-terminus: Protein HIRA (1017 aa).

WD repeat units follow at residues 11-53 and 68-107; these read HNGK…QEDD and NHLA…GPST. A Phosphoserine modification is found at Ser-111. 5 WD repeats span residues 129–168, 172–211, 220–263, 266–322, and 326–367; these read NHSG…EILA, GHSG…LETS, GGTT…TNMD, GHRK…PLVV, and LFDK…DPLS. The segment at 421–479 is interaction with ASF1A; the sequence is REMGSATSVAGVVNGESLEDIRKNLLKKQVETRTADGRRRITPLCIAQLDTGDFSTAFF. Residues 421-729 are interaction with CCNA1; it reads REMGSATSVA…RLKCNREGKE (309 aa). Positions 439 to 475 are required for repression of histone gene transcription; that stretch reads EDIRKNLLKKQVETRTADGRRRITPLCIAQLDTGDFS. Over residues 494 to 509 the composition is skewed to low complexity; the sequence is SSHSSPQLLPLDSSTP. A disordered region spans residues 494-555; sequence SSHSSPQLLP…AALSPSVLTT (62 aa). The segment covering 536–555 has biased composition (polar residues); sequence KDSMNATSTPAALSPSVLTT. At Ser-549 the chain carries Phosphoserine. Phosphothreonine; by CDK2 is present on Thr-555. Ser-557 is modified (phosphoserine). 2 disordered regions span residues 570–589 and 604–625; these read TERS…TPTA and PRDL…KASS. A Phosphothreonine modification is found at Thr-576. Ser-584 carries the post-translational modification Phosphoserine. Phosphothreonine is present on Thr-586. The interval 593 to 826 is interaction with histone H2B; the sequence is LKEQNLVKEL…LAGSDMTVSQ (234 aa). Interaction with PAX3 regions lie at residues 594-739 and 740-828; these read KEQN…SRIL and TAAG…SQIL. The span at 604–619 shows a compositional bias: basic and acidic residues; the sequence is PRDLLESSSDSDEKVP. A phosphoserine mark is found at Ser-610, Ser-611, Ser-612, Ser-614, Ser-661, Ser-675, and Ser-687. The interaction with histone H4 stretch occupies residues 738 to 1017; that stretch reads ILTAAGSCDV…QEQLDILRDK (280 aa).

The protein belongs to the WD repeat HIR1 family. As to quaternary structure, interacts with histone H3-3B, PAX3 and PAX7. Interacts with histone H3.Y. Interacts with CCNA1, HIRIP3, NFU1/HIRIP5 and histone H2B. Part of a complex which includes ASF1A, CABIN1, histone H3.3, histone H4 and UBN1. Post-translationally, sumoylated. In terms of processing, phosphorylated by CDK2/CCNA1 and CDK2/CCNE1 on Thr-555 in vitro. Also phosphorylated on Thr-555 and Ser-687 in vivo. Expressed at high levels in kidney, pancreas and skeletal muscle and at lower levels in brain, heart, liver, lung, and placenta.

Its subcellular location is the nucleus. It localises to the PML body. Cooperates with ASF1A to promote replication-independent chromatin assembly. Required for the periodic repression of histone gene transcription during the cell cycle. Required for the formation of senescence-associated heterochromatin foci (SAHF) and efficient senescence-associated cell cycle exit. The chain is Protein HIRA (HIRA) from Homo sapiens (Human).